Consider the following 303-residue polypeptide: Probable 5-dehydro-4-deoxyglucarate dehydratase (303 aa).

It belongs to the DapA family.

The enzyme catalyses 5-dehydro-4-deoxy-D-glucarate + H(+) = 2,5-dioxopentanoate + CO2 + H2O. The protein operates within carbohydrate acid metabolism; D-glucarate degradation; 2,5-dioxopentanoate from D-glucarate: step 2/2. This chain is Probable 5-dehydro-4-deoxyglucarate dehydratase, found in Pseudomonas fluorescens (strain Pf0-1).